The following is a 570-amino-acid chain: Sulfite reductase [NADPH] hemoprotein beta-component (570 aa).

[4Fe-4S] cluster is bound by residues Cys-434, Cys-440, Cys-479, and Cys-483. Residue Cys-483 participates in siroheme binding.

Belongs to the nitrite and sulfite reductase 4Fe-4S domain family. As to quaternary structure, alpha(8)-beta(8). The alpha component is a flavoprotein, the beta component is a hemoprotein. The cofactor is siroheme. Requires [4Fe-4S] cluster as cofactor.

It carries out the reaction hydrogen sulfide + 3 NADP(+) + 3 H2O = sulfite + 3 NADPH + 4 H(+). Its pathway is sulfur metabolism; hydrogen sulfide biosynthesis; hydrogen sulfide from sulfite (NADPH route): step 1/1. Component of the sulfite reductase complex that catalyzes the 6-electron reduction of sulfite to sulfide. This is one of several activities required for the biosynthesis of L-cysteine from sulfate. The polypeptide is Sulfite reductase [NADPH] hemoprotein beta-component (Escherichia coli O17:K52:H18 (strain UMN026 / ExPEC)).